Reading from the N-terminus, the 654-residue chain is Endoplasmic reticulum chaperone BiP (654 aa).

An N-terminal signal peptide occupies residues 1–18 (MKLSLVAAVLLLLCAARA). The segment at 1 to 80 (MKLSLVAAVL…EGERLIGDAA (80 aa)) is required for interaction with ELAPOR1. 36–39 (GTTY) serves as a coordination point for ATP. Serine 86 is subject to Phosphoserine. Lysine 96 serves as a coordination point for ATP. Lysine 125 is subject to N6-acetyllysine. A nucleotide-binding (NBD) region spans residues 125–280 (KPYIQVDIGG…KKKTGKDVRK (156 aa)). 3'-nitrotyrosine is present on tyrosine 160. N6-acetyllysine is present on lysine 213. ATP is bound at residue 227 to 229 (GGT). At lysine 271 the chain carries N6-acetyllysine. Residue 293–300 (EKAKRALS) coordinates ATP. An N6-acetyllysine modification is found at lysine 326. Lysine 352 participates in a covalent cross-link: Glycyl lysine isopeptide (Lys-Gly) (interchain with G-Cter in SUMO2). Lysine 353 is subject to N6-acetyllysine; alternate. Lysine 353 is covalently cross-linked (Glycyl lysine isopeptide (Lys-Gly) (interchain with G-Cter in SUMO1); alternate). 364-367 (GSTR) lines the ATP pocket. Residues 409-419 (QDTGDLVLLDV) are interdomain linker. Positions 420–500 (CPLTLGIETV…PRGVPQIEVT (81 aa)) are substrate-binding (SBD). N6-succinyllysine is present on lysine 447. The residue at position 492 (arginine 492) is an Omega-N-methylarginine. Threonine 518 carries the post-translational modification O-AMP-threonine; alternate. A Phosphothreonine; alternate modification is found at threonine 518. At lysine 585 the chain carries N6,N6,N6-trimethyllysine; by METTL21A; in vitro. Residue lysine 585 is modified to N6,N6-dimethyllysine; alternate. An N6-methyllysine; alternate modification is found at lysine 585. Lysine 591 is subject to N6-methyllysine. The tract at residues 632–654 (SKLYGSAGPPPTGEEDTSERDEL) is disordered. 2 positions are modified to phosphothreonine: threonine 643 and threonine 648. Positions 644–654 (GEEDTSERDEL) are enriched in acidic residues. Position 649 is a phosphoserine (serine 649). The Prevents secretion from ER signature appears at 651–654 (RDEL).

Belongs to the heat shock protein 70 family. As to quaternary structure, monomer and homooligomer; homooligomerization via the interdomain linker inactivates the chaperone activity and acts as a storage of HSPA5/BiP molecules. Interacts with DNAJC1 (via J domain). Component of an EIF2 complex at least composed of CELF1/CUGBP1, CALR, CALR3, EIF2S1, EIF2S2, HSP90B1 and HSPA5. Part of a large chaperone multiprotein complex comprising DNAJB11, HSP90B1, HSPA5, HYOU, PDIA2, PDIA4, PDIA6, PPIB, SDF2L1, UGGT1 and very small amounts of ERP29, but not, or at very low levels, CALR nor CANX. Interacts with TMEM132A and TRIM21. May form a complex with ERLEC1, OS9, SEL1L and SYVN1. Interacts with DNAJC10. Interacts with DNAJB9/ERdj4; leading to recruit HSPA5/BiP to ERN1/IRE1. Interacts with ERN1/IRE1 (via luminal domain); the interaction takes place following interaction with DNAJB9/ERdj4 and leads to inactivate ERN1/IRE1, the interaction also competitively inhibits ERN1 interaction with MANF. Interacts directly with MANF (via SAP domain); the interaction inhibits ATP binding to HSPA5/BiP and subsequent nucleotide exchange. Interacts with EIF2AK3/PERK (via luminal domain); interaction leads to inactivate EIF2AK3/PERK. Interacts with MX1. Interacts with METTL23. Interacts with CEMIP; the interaction induces calcium leakage from the endoplasmic reticulum and cell migration. Interacts with PCSK4 form; the interaction takes place in the endoplasmic reticulum. Interacts with CIPC. Interacts with CCDC88B (via C-terminus); the interaction opposes ERN1-mediated JNK activation, protecting against apoptosis. Interacts with INPP5K; necessary for INPP5K localization at the endoplasmic reticulum. Interacts with MANF; the interaction is direct. Interacts with LOXL2; leading to activate the ERN1/IRE1-XBP1 pathway of the unfolded protein response. Interacts with CLU under stressed condition; interaction increases CLU protein stability; facilitates its retrotranslocation and redistribution to the mitochondria; cooperatively suppress stress-induced apoptosis by stabilizing mitochondrial membrane integrity. Interacts with CCDC47. Interacts with CLN3. Interacts with ELAPOR1; may regulate the function of HSPA5 in apoptosis and cell proliferation. Interacts with CASP7. Interacts with ILDR2; the interaction stabilizes ILDR2 expression. Interacts with ADAM7. In terms of processing, in unstressed cells, AMPylation at Thr-518 by FICD inactivates the chaperome activity: AMPylated form is locked in a relatively inert state and only weakly stimulated by J domain-containing proteins. In response to endoplasmic reticulum stress, de-AMPylation by the same protein, FICD, restores the chaperone activity.

Its subcellular location is the endoplasmic reticulum lumen. It localises to the melanosome. It is found in the cytoplasm. The protein localises to the cell surface. The catalysed reaction is ATP + H2O = ADP + phosphate + H(+). The chaperone activity is regulated by ATP-induced allosteric coupling of the nucleotide-binding (NBD) and substrate-binding (SBD) domains. In the ADP-bound and nucleotide-free (apo) states, the two domains have little interaction. In contrast, in the ATP-bound state the two domains are tightly coupled, which results in drastically accelerated kinetics in both binding and release of polypeptide substrates. J domain-containing co-chaperones (DNAJB9/ERdj4 or DNAJC10/ERdj5) stimulate the ATPase activity and are required for efficient substrate recognition by HSPA5/BiP. Homooligomerization inactivates participating HSPA5/BiP protomers and probably act as reservoirs to store HSPA5/BiP molecules when they are not needed by the cell. Functionally, endoplasmic reticulum chaperone that plays a key role in protein folding and quality control in the endoplasmic reticulum lumen. Involved in the correct folding of proteins and degradation of misfolded proteins via its interaction with DNAJC10/ERdj5, probably to facilitate the release of DNAJC10/ERdj5 from its substrate. Acts as a key repressor of the EIF2AK3/PERK and ERN1/IRE1-mediated unfolded protein response (UPR). In the unstressed endoplasmic reticulum, recruited by DNAJB9/ERdj4 to the luminal region of ERN1/IRE1, leading to disrupt the dimerization of ERN1/IRE1, thereby inactivating ERN1/IRE1. Also binds and inactivates EIF2AK3/PERK in unstressed cells. Accumulation of misfolded protein in the endoplasmic reticulum causes release of HSPA5/BiP from ERN1/IRE1 and EIF2AK3/PERK, allowing their homodimerization and subsequent activation. Plays an auxiliary role in post-translational transport of small presecretory proteins across endoplasmic reticulum (ER). May function as an allosteric modulator for SEC61 channel-forming translocon complex, likely cooperating with SEC62 to enable the productive insertion of these precursors into SEC61 channel. Appears to specifically regulate translocation of precursors having inhibitory residues in their mature region that weaken channel gating. May also play a role in apoptosis and cell proliferation. In Ictidomys tridecemlineatus (Thirteen-lined ground squirrel), this protein is Endoplasmic reticulum chaperone BiP.